Reading from the N-terminus, the 70-residue chain is Sec-independent protein translocase protein TatA (70 aa).

The helical transmembrane segment at 1 to 21 (MFGLGGQELLLILLIILLLFG) threads the bilayer. A disordered region spans residues 47-70 (EDEFNKAMSDPPEKKEKESPSDKG). Over residues 57-70 (PPEKKEKESPSDKG) the composition is skewed to basic and acidic residues.

Belongs to the TatA/E family. In terms of assembly, forms a complex with TatC.

The protein localises to the cell inner membrane. Its function is as follows. Part of the twin-arginine translocation (Tat) system that transports large folded proteins containing a characteristic twin-arginine motif in their signal peptide across membranes. TatA could form the protein-conducting channel of the Tat system. The protein is Sec-independent protein translocase protein TatA of Prosthecochloris aestuarii (strain DSM 271 / SK 413).